The chain runs to 259 residues: Binding partner of ACD11 1 (259 aa).

The 72-residue stretch at 6–77 (RSVKVGNLSS…QSVIIELAPN (72 aa)) folds into the RRM domain. Residues 219–259 (GEVGQKTKEKVEAEQPSQPAQSQQQLPEGYSPIHSSEYSKN) are disordered. A compositionally biased stretch (low complexity) spans 232–243 (EQPSQPAQSQQQ).

As to quaternary structure, interacts with ACD11, PR1F2 and PR1F3.

It is found in the cytoplasm. Its subcellular location is the membrane. The protein is Binding partner of ACD11 1 (BPA1) of Arabidopsis thaliana (Mouse-ear cress).